The sequence spans 3011 residues: MSTNPKPQRKTKRNTNRRPQDVKFPGGGQIVGGVYLLPRRGPRLGVRATRKTSERSQPRGRRQPIPKARRPEGRTWAQPGYPWPLYGNEGCGWAGWLLSPRGSRPSWGPTDPRRRSRNLGKVIDTLTCGFADLMGYIPLVGAPLGGAARALAHGVRVLEDGVNYATGNLPGCSFSIFLLALLSCLTVPASAYQVRNSSGLYHVTNDCPNSSVVYEAADAILHTPGCVPCVREGNASRCWVAVTPTVATRDGKLPTTQLRRHIDLLVGSATLCSALYVGDLCGSVFLVGQLFTFSPRHHWTTQDCNCSIYPGHITGHRMAWNMMMNWSPTAALVVAQLLRIPQAIMDMIAGAHWGVLAGIKYFSMVGNWAKVLVVLLLFAGVDAETHVTGGNAGRTTAGLVGLLTPGAKQNIQLINTNGSWHINSTALNCNESLNTGWLAGLFYQHKFNSSGCPERLASCRRLTDFAQGWGPISYANGSGLDERPYCWHYPPRPCGIVPAKSVCGPVYCFTPSPVVVGTTDRSGAPTYSWGANDTDVFVLNNTRPPLGNWFGCTWMNSTGFTKVCGAPPCVIGGVGNNTLLCPTDCFRKYPEATYSRCGSGPRITPRCMVDYPYRLWHYPCTINYTIFKVRMYVGGVEHRLEAACNWTRGERCDLEDRDRSELSPLLLSTTQWQVLPCSFTTLPALSTGLIHLHQNIVDVQYLYGVGSSIASWAIKWEYVVLLFLLLADARVCSCLWMMLLISQAEAALENLVILNAASLAGTHGLVSFLVFFCFAWYLKGRWVPGAVYALYGMWPLLLLLLALPQRAYALDTEVAASCGGVVLVGLMALTLSPYYKRYISWCMWWLQYFLTRVEAQLHVWVPPLNVRGGRDAVILLTCVVHPALVFDITKLLLAIFGPLWILQASLLKVPYFVRVQGLLRICALARKIAGGHYVQMAIIKLGALTGTCVYNHLAPLRDWAHNGLRDLAVAVEPVVFSRMETKLITWGADTAACGDIINGLPVSARRGQEILLGPADGMVSKGWRLLAPITAYAQQTRGLLGCIITSLTGRDKNQVEGEVQIVSTATQTFLATCINGVCWTVYHGAGTRTIASPKGPVIQTYTNVDQDLVGWPAPQGSRSLTPCTCGSSDLYLVTRHADVIPVRRRGDSRGSLLSPRPISYLKGSSGGPLLCPTGHAVGLFRAAVCTRGVAKAVDFIPVENLETTMRSPVFTDNSSPPAVPQSFQVAHLHAPTGSGKSTKVPAAYAAKGYKVLVLNPSVAATLGFGAYMSKAHGVDPNIRTGVRTITTGSPITYSTYGKFLADAGCSGGAYDIIICDECHSTDATSISGIGTVLDQAETAGARLVVLATATPPGSVTVSHPNIEEVALSTTGEIPFYGKAIPLEVIKGGRHLIFCHSKKKCDELAAKLVALGINAVAYYRGLDVSVIPTSGDVVVVSTDALMTGFTGDFDSVIDCNTCVTQTVDFSLDPTFTIETTTLPQDAVSRTQRRGRTGRGKPGIYRFVAPGERPSGMFDSSVLCECYDAGCAWYELTPAETTVRLRAYMNTPGLPVCQDHLGFWEGVFTGLTHIDAHFLSQTKQSGENFPYLVAYQATVCARAQAPPPSWDQMRKCLIRLKPTLHGPTPLLYRLGAVQNEVTLTHPITKYIMTCMSADLEVVTSTWVLVGGVLAALAAYCLSTGCVVIVGRIVLSGKPAIIPDREVLYQEFDEMEECSQHLPYIEQGMMLAEQFKQKALGLLQTASRHAEVITPAVQTNWQKLEVFWAKHMWNFISGIQYLAGLSTLPGNPAIASLMAFTAAVTSPLTTGQTLLFNILGGWVAAQLAAPGAATAFVGAGLAGAALDSVGLGKVLVDILAGYGAGVAGALVAFKIMSGEVPSTEDLVNLLPAILSPGALAVGVVFASILRRRVGPGEGAVQWMNRLIAFASRGNHVSPTHYVPESDAAARVTAILSSLTVTQLLRRLHQWISSECTTPCSGSWLRDIWDWICEVLSDFKTWLKAKLMPQLPGIPFVSCQRGYRGVWRGDGIMHTRCHCGAEITGHVKNGTMRIVGPRTCKNMWSGTFFINAYTTGPCTPLPAPNYKFALWRVSAEEYVEIRRVGDFHYVSGMTTDNLKCPCQIPSPEFFTELDGVRLHRFAPPCKPLLREEVSFRVGLHEYPVGSQLPCEPEPDVAVLTSMLTDPSHITAEAAGRRLARGSPPSMASSSASQLSAPSLKATCTANHDSPDAELIEANLLWRQEMGGNITRVESENKVVILDSFDPLVAEEDEREVSVPAEILRKSRRFAPALPVWARPDYNPLLVETWKKPDYEPPVVHGCPLPPPRSPPVPPPRKKRTVVLTESTLPTALAELATKSFGSSSTSGITGDNTTTSSEPAPSGCPPDSDVESYSSMPPLEGEPGDPDLSDGSWSTVSSGADTEDVVCCSMSYSWTGALVTPCAAEEQKLPINALSNSLLRHHNLVYSTTSRSACQRKKKVTFDRLQVLDSHYQDVLKEVKAAASKVKANLLSVEEACSLAPPHSAKSKFGYGAKDVRCHARKAVAHINSVWKDLLEDSVTPIDTTIMAKNEVFCVQPEKGGRKPARLIVFPDLGVRVCEKMALYDVVSKLPLAVMGSSYGFQYSPGQRVEFLVQAWKSKKTPMGLSYDTRCFDSTVTESDIRTEEAIYQCCDLDPQARVAIKSLTERLYVGGPLTNSRGENCGYRRCRASRVLTTSCGNTLTRYIKARAACRAAGLQDCTMLVCGDDLVVICESAGVQEDAASLRAFTEAMTRYSAPPGDPPQPEYDLELITSCSSNVSVAHDGAGKRVYYLTRDPTTPLARAAWETARHTPVNSWLGNIIMFAPTLWARMILMTHFFSVLIARDQLEQALNCEIYGACYSIEPLDLPPIIQRLHGLSAFSLHSYSPGEINRVAACLRKLGVPPLRAWRHRAWSVRARLLARGGKAAICGKYLFNWAVRTKLKLTPITAAGRLDLSGWFTAGYSGGDIYHSVSHARPRWFWFCLLLLAAGVGIYLLPNR.

Serine 2 carries the post-translational modification N-acetylserine; by host. The interaction with STAT1 stretch occupies residues serine 2–lysine 23. Residues serine 2–proline 58 form an interaction with EIF2AK2/PKR region. An interaction with DDX3X region spans residues serine 2–arginine 59. The interval serine 2–threonine 75 is disordered. Topologically, residues serine 2–asparagine 168 are cytoplasmic. 2 short sequence motifs (nuclear localization signal) span residues proline 5–arginine 13 and proline 38–arginine 43. Positions proline 7 to asparagine 16 are enriched in basic residues. Residues glycine 32–arginine 47 are compositionally biased toward low complexity. At serine 53 the chain carries Phosphoserine; by host. 2 short sequence motifs (nuclear localization signal) span residues proline 58–proline 64 and proline 66–proline 71. Positions proline 58–alanine 68 are enriched in basic residues. Serine 99 bears the Phosphoserine; by host mark. The tract at residues proline 112–alanine 152 is important for endoplasmic reticulum and mitochondrial localization. Phosphoserine; by host PKA is present on serine 116. The interval valine 122–serine 173 is interaction with APOA2. Residues tyrosine 164 to glycine 167 are important for lipid droplets localization. A helical membrane pass occupies residues leucine 169–alanine 189. Residues leucine 178 to alanine 191 constitute a propeptide, ER anchor for the core protein, removed in mature form by host signal peptidase. Topologically, residues serine 190–glycine 358 are lumenal. Residues asparagine 196, asparagine 209, and asparagine 234 are each glycosylated (N-linked (GlcNAc...) asparagine; by host). The tract at residues leucine 265–arginine 296 is important for fusion. An N-linked (GlcNAc...) asparagine; by host glycan is attached at asparagine 305. Residues isoleucine 359 to alanine 379 traverse the membrane as a helical segment. Topologically, residues glycine 380–leucine 725 are lumenal. The HVR1 stretch occupies residues threonine 385–isoleucine 411. Asparagine 417, asparagine 423, asparagine 430, and asparagine 448 each carry an N-linked (GlcNAc...) (high mannose) asparagine; by host glycan. 4 cysteine pairs are disulfide-bonded: cysteine 429–cysteine 552, cysteine 452–cysteine 459, cysteine 486–cysteine 494, and cysteine 503–cysteine 508. The HVR2 stretch occupies residues tyrosine 474 to glycine 479. Residue asparagine 476 is glycosylated (N-linked (GlcNAc...) (high mannose) asparagine; by host). The segment at leucine 480–proline 493 is CD81-binding 1. Asparagine 532 and asparagine 540 each carry an N-linked (GlcNAc...) (high mannose) asparagine; by host glycan. Residues proline 544–glycine 551 are CD81-binding 2. A glycan (N-linked (GlcNAc...) (high mannose) asparagine; by host) is linked at asparagine 556. Residues cysteine 564 and cysteine 569 are joined by a disulfide bond. Asparagine 576 is a glycosylation site (N-linked (GlcNAc...) (high mannose) asparagine; by host). Disulfide bonds link cysteine 581–cysteine 585, cysteine 597–cysteine 620, and cysteine 607–cysteine 644. Asparagine 623 and asparagine 645 each carry an N-linked (GlcNAc...) (high mannose) asparagine; by host glycan. Cysteine 652 and cysteine 677 are disulfide-bonded. Residues serine 660 to glutamine 671 form an EIF2AK2/eIF2-alpha phosphorylation homology domain (PePHD) region. The helical transmembrane segment at leucine 726–alanine 746 threads the bilayer. Residues alanine 747–alanine 757 are Lumenal-facing. The chain crosses the membrane as a helical span at residues serine 758 to leucine 778. Over lysine 779 to arginine 781 the chain is Cytoplasmic. A helical membrane pass occupies residues tryptophan 782–leucine 803. Over proline 804 to glutamate 813 the chain is Lumenal. Residues valine 814–tyrosine 834 traverse the membrane as a helical segment. Topologically, residues tyrosine 835–tyrosine 838 are cytoplasmic. The helical transmembrane segment at isoleucine 839–valine 859 threads the bilayer. Residues tryptophan 860–histidine 881 are Lumenal-facing. The chain crosses the membrane as a helical span at residues proline 882 to leucine 902. Residues leucine 899–leucine 1026 form the Peptidase C18 domain. Over glutamine 903 to threonine 1657 the chain is Cytoplasmic. Residues alanine 904–arginine 1206 are protease NS2-3. Cysteine 922 is lipidated: S-palmitoyl cysteine; by host. The interval alanine 929 to valine 949 is interaction with host SCPS1. Residues histidine 952, glutamate 972, and cysteine 993 each act as for protease NS2 activity; shared with dimeric partner in the active site. The region spanning alanine 1027–proline 1208 is the Peptidase S29 domain. Active-site charge relay system; for serine protease NS3 activity residues include histidine 1083 and aspartate 1107. The Zn(2+) site is built by cysteine 1123 and cysteine 1125. Serine 1165 functions as the Charge relay system; for serine protease NS3 activity in the catalytic mechanism. Zn(2+) is bound by residues cysteine 1171 and histidine 1175. In terms of domain architecture, Helicase ATP-binding spans proline 1217 to threonine 1369. Alanine 1230–serine 1237 is an ATP binding site. Positions 1237 and 1317 each coordinate Mg(2+). A DECH box motif is present at residues aspartate 1316 to histidine 1319. Residues glutamine 1486–glycine 1497 form an RNA-binding region. Residues serine 1658–glycine 1678 traverse the membrane as a helical segment. Positions cysteine 1679 to glycine 1690 are NS3-binding. Over cysteine 1679 to glutamine 1805 the chain is Cytoplasmic. Residues threonine 1806 to glycine 1824 form a helical membrane-spanning segment. The Lumenal portion of the chain corresponds to alanine 1825–alanine 1828. Residues phenylalanine 1829–valine 1849 traverse the membrane as a helical segment. Residues glycine 1833–glycine 1861 are glycine zipper. A topological domain (cytoplasmic) is located at residue aspartate 1850. The chain crosses the membrane as a helical span at residues isoleucine 1851–glycine 1871. Residues glutamate 1872 to asparagine 1881 are Lumenal-facing. Residues leucine 1882–leucine 1902 form a helical membrane-spanning segment. The Cytoplasmic portion of the chain corresponds to arginine 1903 to cysteine 1972. Cysteine 1968 is lipidated: S-palmitoyl cysteine; by host. A lipid anchor (S-palmitoyl cysteine; by host; partial) is attached at cysteine 1972. The stretch at serine 1973–leucine 2003 is an intramembrane region. Residues arginine 1978–lysine 1998 are membrane-binding. Over proline 2004–arginine 2990 the chain is Cytoplasmic. The tract at residues glycine 2005–serine 2221 is D1; RNA-binding. Zn(2+)-binding residues include cysteine 2011, cysteine 2029, cysteine 2031, and cysteine 2052. The tract at residues glutamate 2120–alanine 2208 is FKBP8-binding. The tract at residues glutamate 2120–threonine 2332 is transcriptional activation. An interaction with non-structural protein 4A region spans residues proline 2135–proline 2139. Residues arginine 2189–leucine 2441 form an interaction with host SKP2 region. Serine 2194 is subject to Phosphoserine; by host; in p56. Serine 2197 is subject to Phosphoserine; by host; in p58. At serine 2201 the chain carries Phosphoserine; by host; in p56 and p58, regulates intracellular NS5A distribution. 3 positions are modified to phosphoserine; by host; in p58: serine 2204, serine 2207, and serine 2210. The segment at serine 2210–lysine 2249 is ISDR. The tract at residues serine 2210–leucine 2275 is interaction with EIF2AK2/PKR. Residues aspartate 2223–proline 2315 form a D2 region. The disordered stretch occupies residues alanine 2224–proline 2315. An NS4B-binding region spans residues lysine 2249–tyrosine 2306. The segment at phenylalanine 2281–leucine 2297 is interaction with human PPIA/CYPA. Positions proline 2315 to proline 2326 are enriched in pro residues. Serine 2321 carries the post-translational modification Phosphoserine; by host. The short motif at proline 2322–proline 2325 is the SH3-binding element. The short motif at proline 2326 to valine 2334 is the Nuclear localization signal element. The tract at residues lysine 2329–cysteine 2420 is D3. The interaction with host IFI27 stretch occupies residues threonine 2332 to leucine 2441. The disordered stretch occupies residues glutamate 2346–serine 2409. Over residues threonine 2349–serine 2369 the composition is skewed to low complexity. A Glycyl lysine isopeptide (Lys-Gly) (interchain with G-Cter in ubiquitin) cross-link involves residue lysine 2350. A V3 region spans residues serine 2354–proline 2377. Residues threonine 2367 to valine 2417 are interaction with host VAPB. 2 positions are modified to phosphoserine; by host: serine 2449 and serine 2462. The RdRp catalytic domain occupies proline 2634–aspartate 2752. Mg(2+) is bound by residues aspartate 2640, aspartate 2738, and aspartate 2739. The helical transmembrane segment at tryptophan 2991–arginine 3011 threads the bilayer.

The protein belongs to the hepacivirus polyprotein family. In terms of assembly, homooligomer. Interacts with E1 (via C-terminus). Interacts with the non-structural protein 5A. Interacts (via N-terminus) with host STAT1 (via SH2 domain); this interaction results in decreased STAT1 phosphorylation and ubiquitin-mediated proteasome-dependent STAT1 degradation, leading to decreased IFN-stimulated gene transcription. Interacts with host STAT3; this interaction constitutively activates STAT3. Associates with host LTBR receptor. Interacts with host TNFRSF1A receptor and possibly induces apoptosis. Interacts with host HNRPK. Interacts with host YWHAE. Interacts with host UBE3A/E6AP. Interacts with host DDX3X. Interacts with host APOA2. Interacts with host RXRA protein. Interacts with host SP110 isoform 3/Sp110b; this interaction sequesters the transcriptional corepressor SP110 away from the nucleus. Interacts with host CREB3 nuclear transcription protein; this interaction triggers cell transformation. Interacts with host ACY3. Interacts with host C1QR1. Interacts with host RBM24; this interaction, which enhances the interaction of the mature core protein with 5'-UTR, may inhibit viral translation and favor replication. Interacts (via N-terminus) with host EIF2AK2/PKR (via N-terminus); this interaction induces the autophosphorylation of EIF2AK2. Part of the viral assembly initiation complex composed of NS2, E1, E2, NS3, NS4A, NS5A and the mature core protein. Forms a heterodimer with envelope glycoprotein E2. Interacts with mature core protein. Interacts with protease NS2. The heterodimer E1/E2 interacts with host CLDN1; this interaction plays a role in viral entry into host cell. Interacts with host SPSB2 (via C-terminus). Part of the viral assembly initiation complex composed of NS2, E1, E2, NS3, NS4A, NS5A and the mature core protein. Interacts with host NEURL3; this interaction prevents E1 binding to glycoprotein E2. As to quaternary structure, forms a heterodimer with envelope glycoprotein E1. Interacts with host CD81 and SCARB1 receptors; these interactions play a role in viral entry into host cell. Interacts with host EIF2AK2/PKR; this interaction inhibits EIF2AK2 and probably allows the virus to evade the innate immune response. Interacts with host CD209/DC-SIGN and CLEC4M/DC-SIGNR. Interact with host SPCS1; this interaction is essential for viral particle assembly. Interacts with protease NS2. The heterodimer E1/E2 interacts with host CLDN1; this interaction plays a role in viral entry into host cell. Part of the viral assembly initiation complex composed of NS2, E1, E2, NS3, NS4A, NS5A and the mature core protein. Interacts with host SLC3A2/4F2hc; the interaction may facilitate viral entry into host cell. Interacts with human PLSCR1. In terms of assembly, homohexamer. Homoheptamer. Interacts with protease NS2. Homodimer. Interacts with host SPCS1; this interaction is essential for viral particle assembly. Interacts with envelope glycoprotein E1. Interacts with envelope glycoprotein E2. Interacts with viroporin p7. Interacts with serine protease/helicase NS3. Part of the replication complex composed of NS2, NS3, NS4A, NS4B, NS5A and the RNA-directed RNA polymerase embedded in an ER-derived membranous web. Part of the viral assembly initiation complex composed of NS2, E1, E2, NS3, NS4A, NS5A and the mature core protein. As to quaternary structure, interacts with protease NS2. Interacts with non-structural protein 4A; this interaction stabilizes the folding of NS3 serine protease. NS3-NS4A interaction is essential for NS3 activation and allows membrane anchorage of the latter. NS3/NS4A complex also prevents phosphorylation of host IRF3, thus preventing the establishment of dsRNA induced antiviral state. Interacts with host MAVS; this interaction leads to the cleavage and inhibition of host MAVS. Interacts with host TICAM1; this interaction leads to the cleavage and inhibition of host TICAM1. Interacts with host TANK-binding kinase/TBK1; this interaction results in the inhibition of the association between TBK1 and IRF3, which leads to the inhibition of IRF3 activation. Interacts with host RBM24. Part of the replication complex composed of NS2, NS3, NS4A, NS4B, NS5A and the RNA-directed RNA polymerase embedded in an ER-derived membranous web. Part of the viral assembly initiation complex composed of NS2, E1, E2, NS3, NS4A, NS5A and the mature core protein. In terms of assembly, interacts with NS3 serine protease; this interaction stabilizes the folding of NS3 serine protease. NS3-NS4A interaction is essential for NS3 activation and allows membrane anchorage of the latter. Interacts with non-structural protein 5A (via N-terminus). Part of the replication complex composed of NS2, NS3, NS4A, NS4B, NS5A and the RNA-directed RNA polymerase embedded in an ER-derived membranous web. Part of the viral assembly initiation complex composed of NS2, E1, E2, NS3, NS4A, NS5A and the mature core protein. Homomultimer. Interacts with non-structural protein NS5A. Interacts with host PLA2G4C; this interaction likely initiates the recruitment of replication complexes to lipid droplets. Interacts with host STING; this interaction disrupts the interaction between STING and TBK1 thereby suppressing the interferon signaling. Interacts with host METTL22; this interaction may promote the recruitment of NS4B in the proximity of lipid droplet. Part of the replication complex composed of NS2, NS3, NS4A, NS4B, NS5A and the RNA-directed RNA polymerase embedded in an ER-derived membranous web. As to quaternary structure, monomer. Homodimer; dimerization is required for RNA-binding. Interacts with the mature core protein. Interacts (via N-terminus) with non-structural protein 4A. Interacts with non-structural protein 4B. Interacts (via region D2) with RNA-directed RNA polymerase. Part of the viral assembly initiation complex composed of NS2, E1, E2, NS3, NS4A, NS5A and the mature core protein. Part of the replication complex composed of NS2, NS3, NS4A, NS4B, NS5A and the RNA-directed RNA polymerase embedded in an ER-derived membranous web. Interacts with host GRB2. Interacts with host BIN1. Interacts with host PIK3R1. Interacts with host SRCAP. Interacts with host FKBP8. Interacts (via C-terminus) with host VAPB (via MSP domain). Interacts with host EIF2AK2/PKR; this interaction leads to disruption of EIF2AK2 dimerization by NS5A and probably allows the virus to evade the innate immune response. Interacts (via N-terminus) with host PACSIN2 (via N-terminus); this interaction attenuates protein kinase C alpha-mediated phosphorylation of PACSIN2 by disrupting the interaction between PACSIN2 and PRKCA. Interacts (via N-terminus) with host SRC kinase (via SH2 domain). Interacts with most Src-family kinases. Interacts with host IFI27 and SKP2; promotes the ubiquitin-mediated proteasomal degradation of NS5A. Interacts with host GPS2. Interacts with host TNFRSF21; this interaction allows the modulation by the virus of JNK, p38 MAPK, STAT3, and Akt signaling pathways in a DR6-dependent manner. Interacts (via N-terminus) with host CIDEB (via N-terminus); this interaction seems to regulate the association of HCV particles with APOE. Interacts with host CHKA/Choline Kinase-alpha; CHKA bridges host PI4KA and NS5A and potentiates NS5A-stimulated PI4KA activity, which then facilitates the targeting of the ternary complex to the ER for viral replication. Interacts with host SPSB2 (via C-terminus); this interaction targets NS5A for ubiquitination and degradation. Interacts with host RAB18; this interaction may promote the association of NS5A and other replicase components with lipid droplets. Interacts (via region D2) with host PPIA/CYPA; the interaction stimulates RNA-binding ability of NS5A and is dependent on the peptidyl-prolyl cis-trans isomerase activity of PPIA/CYPA. Interacts with host TRIM14; this interaction induces the degradation of NS5A. In terms of assembly, homooligomer. Interacts with non-structural protein 5A. Interacts with host VAPB. Interacts with host PRK2/PKN2. Interacts with host HNRNPA1 and SEPT6; these interactions facilitate the viral replication. Part of the replication complex composed of NS2, NS3, NS4A, NS4B, NS5A and the RNA-directed RNA polymerase embedded in an ER-derived membranous web. Zn(2+) serves as cofactor. Requires Mg(2+) as cofactor. Post-translationally, specific enzymatic cleavages in vivo yield mature proteins. The structural proteins, core, E1, E2 and p7 are produced by proteolytic processing by host signal peptidases. The core protein precursor is synthesized as a 23 kDa, which is retained in the ER membrane through the hydrophobic signal peptide. Cleavage by the signal peptidase releases the 21 kDa mature core protein. The cleavage of the core protein precursor occurs between aminoacids 176 and 188 but the exact cleavage site is not known. Some degraded forms of the core protein appear as well during the course of infection. The other proteins (p7, NS2, NS3, NS4A, NS4B, NS5A and NS5B) are cleaved by the viral proteases. Autoprocessing between NS2 and NS3 is mediated by the NS2 cysteine protease catalytic domain and regulated by the NS3 N-terminal domain. Phosphorylated by host PKC and PKA. In terms of processing, ubiquitinated; mediated by UBE3A and leading to core protein subsequent proteasomal degradation. Post-translationally, highly N-glycosylated. Palmitoylation is required for NS2/3 autoprocessing and E2 recruitment to membranes. In terms of processing, palmitoylated. This modification may play a role in its polymerization or in protein-protein interactions. Post-translationally, cleaved by host caspases which are probably activated by the viral infection. Ubiquitinated. Ubiquitination, most probably at Lys-2350, mediated by host IFI27 and SKP2 leads to proteasomal degradation, restricting viral infection. Ubiquitination by host TRIM22 leads to interruption of viral replication. In terms of processing, phosphorylated on serines in a basal form termed p56. p58 is a hyperphosphorylated form of p56. p56 and p58 coexist in the cell in roughly equivalent amounts. Hyperphosphorylation is dependent on the presence of NS4A. Host CSNK1A1/CKI-alpha, PI4KA or RPS6KB1 kinases may be responsible for NS5A phosphorylation. Phosphorylated NS5A is involved in viral replication. Post-translationally, tyrosine phosphorylation is essential for the interaction with host SRC. The N-terminus is phosphorylated by host PRK2/PKN2.

It localises to the host endoplasmic reticulum membrane. It is found in the host mitochondrion membrane. Its subcellular location is the virion. The protein resides in the host cytoplasm. The protein localises to the host nucleus. It localises to the host lipid droplet. It is found in the virion membrane. Its subcellular location is the host mitochondrion. The protein resides in the host cell membrane. The protein localises to the host perinuclear region. The catalysed reaction is Hydrolysis of four peptide bonds in the viral precursor polyprotein, commonly with Asp or Glu in the P6 position, Cys or Thr in P1 and Ser or Ala in P1'.. The enzyme catalyses a ribonucleoside 5'-triphosphate + H2O = a ribonucleoside 5'-diphosphate + phosphate + H(+). It catalyses the reaction ATP + H2O = ADP + phosphate + H(+). It carries out the reaction RNA(n) + a ribonucleoside 5'-triphosphate = RNA(n+1) + diphosphate. With respect to regulation, inhibited by the antiviral drug hexamethylene amiloride. Inhibited by amantadine. Inhibition by amantadine appears to be genotype-dependent. Also inhibited by long-alkyl-chain iminosugar derivatives. Its activity is regulated as follows. Activity is up-regulated by PRK2/PKN2-mediated phosphorylation. In terms of biological role, packages viral RNA to form a viral nucleocapsid, and promotes virion budding. Participates in the viral particle production as a result of its interaction with the non-structural protein 5A. Binds RNA and may function as a RNA chaperone to induce the RNA structural rearrangements taking place during virus replication. Modulates viral translation initiation by interacting with viral IRES and 40S ribosomal subunit. Affects various cell signaling pathways, host immunity and lipid metabolism. Prevents the establishment of cellular antiviral state by blocking the interferon-alpha/beta (IFN-alpha/beta) and IFN-gamma signaling pathways and by blocking the formation of phosphorylated STAT1 and promoting ubiquitin-mediated proteasome-dependent degradation of STAT1. Activates STAT3 leading to cellular transformation. Regulates the activity of cellular genes, including c-myc and c-fos. May repress the promoter of p53, and sequester CREB3 and SP110 isoform 3/Sp110b in the cytoplasm. Represses cell cycle negative regulating factor CDKN1A, thereby interrupting an important check point of normal cell cycle regulation. Targets transcription factors involved in the regulation of inflammatory responses and in the immune response: suppresses NF-kappa-B activation, and activates AP-1. Binds to dendritic cells (DCs) via C1QR1, resulting in down-regulation of T-lymphocytes proliferation. Alters lipid metabolism by interacting with hepatocellular proteins involved in lipid accumulation and storage. Induces up-regulation of FAS promoter activity, and thereby contributes to the increased triglyceride accumulation in hepatocytes (steatosis). Its function is as follows. Forms a heterodimer with envelope glycoprotein E2, which mediates virus attachment to the host cell, virion internalization through clathrin-dependent endocytosis and fusion with host membrane. Fusion with the host cell is most likely mediated by both E1 and E2, through conformational rearrangements of the heterodimer required for fusion rather than a classical class II fusion mechanism. E1/E2 heterodimer binds host apolipoproteins such as APOB and APOE thereby forming a lipo-viro-particle (LVP). APOE associated to the LVP allows the initial virus attachment to cell surface receptors such as the heparan sulfate proteoglycans (HSPGs), syndecan-1 (SDC1), syndecan-1 (SDC2), the low-density lipoprotein receptor (LDLR) and scavenger receptor class B type I (SCARB1). The cholesterol transfer activity of SCARB1 allows E2 exposure and binding of E2 to SCARB1 and the tetraspanin CD81. E1/E2 heterodimer binding on CD81 activates the epithelial growth factor receptor (EGFR) signaling pathway. Diffusion of the complex E1/E2-EGFR-SCARB1-CD81 to the cell lateral membrane allows further interaction with Claudin 1 (CLDN1) and occludin (OCLN) to finally trigger HCV entry. Functionally, forms a heterodimer with envelope glycoprotein E1, which mediates virus attachment to the host cell, virion internalization through clathrin-dependent endocytosis and fusion with host membrane. Fusion with the host cell is most likely mediated by both E1 and E2, through conformational rearrangements of the heterodimer required for fusion rather than a classical class II fusion mechanism. The interaction between E2 and host apolipoprotein E/APOE allows the proper assembly, maturation and infectivity of the viral particles. This interaction is probably promoted via the up-regulation of cellular autophagy by the virus. E1/E2 heterodimer binds host apolipoproteins such as APOB and APOE thereby forming a lipo-viro-particle (LVP). APOE associated to the LVP allows the initial virus attachment to cell surface receptors such as the heparan sulfate proteoglycans (HSPGs), syndecan-1 (SDC1), syndecan-1 (SDC2), the low-density lipoprotein receptor (LDLR) and scavenger receptor class B type I (SCARB1). The cholesterol transfer activity of SCARB1 allows E2 exposure and binding of E2 to SCARB1 and the tetraspanin CD81. E1/E2 heterodimer binding on CD81 activates the epithelial growth factor receptor (EGFR) signaling pathway. Diffusion of the complex E1/E2-EGFR-SCARB1-CD81 to the cell lateral membrane allows further interaction with Claudin 1 (CLDN1) and occludin (OCLN) to finally trigger HCV entry. Inhibits host EIF2AK2/PKR activation, preventing the establishment of an antiviral state. Viral ligand for CD209/DC-SIGN and CLEC4M/DC-SIGNR, which are respectively found on DCs, and on liver sinusoidal endothelial cells and macrophage-like cells of lymph node sinuses. These interactions allow the capture of circulating HCV particles by these cells and subsequent facilitated transmission to permissive cells such as hepatocytes and lymphocyte subpopulations. The interaction between E2 and host amino acid transporter complex formed by SLC3A2 and SLC7A5/LAT1 may facilitate viral entry into host cell. Ion channel protein that acts as a viroporin and plays an essential role in the assembly, envelopment and secretion of viral particles. Participates in virus envelopment by coordinating the encounter between NS5A and NS2-based assembly sites loaded with E1/E2 heterodimer, which subsequently leads to nucleocapsid envelopment. Creates a pore in acidic organelles and releases Ca(2+) and H(+) in the cytoplasm of infected cells, leading to a productive viral infection. High levels of cytoplasmic Ca(2+) may trigger membrane trafficking and transport of viral ER-associated proteins to viroplasms, sites of viral genome replication. The release of Ca(2+) may also activate the inflamasome leading to chronic inflammation. Targets also host mitochondria and induces mitochondrial depolarization. In addition of its role as a viroporin, acts as a lipid raft adhesion factor. In terms of biological role, cysteine protease required for the proteolytic auto-cleavage between the non-structural proteins NS2 and NS3. The N-terminus of NS3 is required for the function of NS2 protease (active region NS2-3). Promotes the initiation of viral particle assembly by mediating the interaction between structural and non-structural proteins. Its function is as follows. Displays three enzymatic activities: serine protease with a chymotrypsin-like fold, NTPase and RNA helicase. NS3 serine protease, in association with NS4A, is responsible for the cleavages of NS3-NS4A, NS4A-NS4B, NS4B-NS5A and NS5A-NS5B. The NS3/NS4A complex prevents phosphorylation of host IRF3, thus preventing the establishment of dsRNA induced antiviral state. The NS3/NS4A complex induces host amino acid transporter component SLC3A2, thus contributing to HCV propagation. NS3 RNA helicase binds to RNA and unwinds both dsDNA and dsRNA in the 3' to 5' direction, and likely resolves RNA complicated stable secondary structures in the template strand. Binds a single ATP and catalyzes the unzipping of a single base pair of dsRNA. Inhibits host antiviral proteins TBK1 and IRF3 thereby preventing the establishment of an antiviral state. Cleaves host MAVS/CARDIF thereby preventing the establishment of an antiviral state. Cleaves host TICAM1/TRIF, thereby disrupting TLR3 signaling and preventing the establishment of an antiviral state. Functionally, peptide cofactor which forms a non-covalent complex with the N-terminal of NS3 serine protease. The NS3/NS4A complex prevents phosphorylation of host IRF3, thus preventing the establishment of dsRNA induced antiviral state. The NS3/NS4A complex induces host amino acid transporter component SLC3A2, thus contributing to HCV propagation. Induces a specific membrane alteration that serves as a scaffold for the virus replication complex. This membrane alteration gives rise to the so-called ER-derived membranous web that contains the replication complex. NS4B self-interaction contributes to its function in membranous web formation. Promotes host TRIF protein degradation in a CASP8-dependent manner thereby inhibiting host TLR3-mediated interferon signaling. Disrupts the interaction between STING and TBK1 contributing to the inhibition of interferon signaling. In terms of biological role, phosphorylated protein that is indispensable for viral replication and assembly. Both hypo- and hyperphosphorylated states are required for the viral life cycle. The hyperphosphorylated form of NS5A is an inhibitor of viral replication. Involved in RNA-binding and especially in binding to the viral genome. Zinc is essential for RNA-binding. Participates in the viral particle production as a result of its interaction with the viral mature core protein. Its interaction with host VAPB may target the viral replication complex to vesicles. Down-regulates viral IRES translation initiation. Mediates interferon resistance, presumably by interacting with and inhibiting host EIF2AK2/PKR. Prevents BIN1-induced apoptosis. Acts as a transcriptional activator of some host genes important for viral replication when localized in the nucleus. Via the interaction with host PACSIN2, modulates lipid droplet formation in order to promote virion assembly. Modulates TNFRSF21/DR6 signaling pathway for viral propagation. Its function is as follows. RNA-dependent RNA polymerase that performs primer-template recognition and RNA synthesis during viral replication. Initiates RNA transcription/replication at a flavin adenine dinucleotide (FAD), resulting in a 5'- FAD cap on viral RNAs. In this way, recognition of viral 5' RNA by host pattern recognition receptors can be bypassed, thereby evading activation of antiviral pathways. The protein is Genome polyprotein of Homo sapiens (Human).